Consider the following 509-residue polypeptide: Probable cytochrome P450 6a14 (509 aa).

Position 454 (C454) interacts with heme.

Belongs to the cytochrome P450 family. It depends on heme as a cofactor.

It localises to the endoplasmic reticulum membrane. The protein localises to the microsome membrane. Functionally, may be involved in the metabolism of insect hormones and in the breakdown of synthetic insecticides. This is Probable cytochrome P450 6a14 (Cyp6a14) from Drosophila melanogaster (Fruit fly).